Reading from the N-terminus, the 709-residue chain is Elongation factor G (709 aa).

In terms of domain architecture, tr-type G spans 9–296 (AKVRNIGIMA…AVVRYLPSPL (288 aa)). Residues 18-25 (AHIDAGKT), 86-90 (DTPGH), and 140-143 (NKLD) each bind GTP.

Belongs to the TRAFAC class translation factor GTPase superfamily. Classic translation factor GTPase family. EF-G/EF-2 subfamily.

The protein resides in the cytoplasm. In terms of biological role, catalyzes the GTP-dependent ribosomal translocation step during translation elongation. During this step, the ribosome changes from the pre-translocational (PRE) to the post-translocational (POST) state as the newly formed A-site-bound peptidyl-tRNA and P-site-bound deacylated tRNA move to the P and E sites, respectively. Catalyzes the coordinated movement of the two tRNA molecules, the mRNA and conformational changes in the ribosome. This is Elongation factor G from Streptomyces griseus subsp. griseus (strain JCM 4626 / CBS 651.72 / NBRC 13350 / KCC S-0626 / ISP 5235).